The following is a 917-amino-acid chain: Phosphoenolpyruvate carboxylase (917 aa).

Active-site residues include H145 and K578.

It belongs to the PEPCase type 1 family. Mg(2+) serves as cofactor.

The enzyme catalyses oxaloacetate + phosphate = phosphoenolpyruvate + hydrogencarbonate. Forms oxaloacetate, a four-carbon dicarboxylic acid source for the tricarboxylic acid cycle. This chain is Phosphoenolpyruvate carboxylase, found in Azoarcus sp. (strain BH72).